A 233-amino-acid chain; its full sequence is Cytidylate kinase (233 aa).

15–23 (GPSGAGKSS) contacts ATP. Over residues 183–200 (QRDRQDEGREHAPLKQAE) the composition is skewed to basic and acidic residues. A disordered region spans residues 183 to 203 (QRDRQDEGREHAPLKQAEDAV).

Belongs to the cytidylate kinase family. Type 1 subfamily.

The protein localises to the cytoplasm. The enzyme catalyses CMP + ATP = CDP + ADP. It catalyses the reaction dCMP + ATP = dCDP + ADP. This Geobacter sp. (strain M21) protein is Cytidylate kinase.